A 271-amino-acid chain; its full sequence is Tryptophan synthase alpha chain (271 aa).

Residues E56 and D67 each act as proton acceptor in the active site.

It belongs to the TrpA family. As to quaternary structure, tetramer of two alpha and two beta chains.

The enzyme catalyses (1S,2R)-1-C-(indol-3-yl)glycerol 3-phosphate + L-serine = D-glyceraldehyde 3-phosphate + L-tryptophan + H2O. It functions in the pathway amino-acid biosynthesis; L-tryptophan biosynthesis; L-tryptophan from chorismate: step 5/5. Functionally, the alpha subunit is responsible for the aldol cleavage of indoleglycerol phosphate to indole and glyceraldehyde 3-phosphate. The protein is Tryptophan synthase alpha chain of Mycolicibacterium paratuberculosis (strain ATCC BAA-968 / K-10) (Mycobacterium paratuberculosis).